The sequence spans 671 residues: Heat shock transcription factor hsf-1 (671 aa).

Low complexity-rich tracts occupy residues 1 to 17 (MQPT…QQQQ) and 38 to 52 (QQAP…NHQN). Residues 1–61 (MQPTGNQIQQ…NGAIGGKKSS (61 aa)) form a disordered region. Residues 89 to 196 (LPVFLIKLWN…LLSQIKRKQS (108 aa)) are DNA-binding domain. Positions 206–240 (NEQTQQNLEVVMAEMRAMREKAKNMEDKMNKLTKE) form a coiled coil. Disordered stretches follow at residues 329–423 (QEPF…PLTH), 437–493 (YQGA…VNNY), 526–552 (HHPT…GLSP), and 612–671 (NAPE…PNLV). Residues 370 to 386 (GAQSSRYSDGGATSSRE) show a composition bias toward polar residues. Residues 439–456 (GASPASGGPSTSSSAPSG) are compositionally biased toward low complexity. 2 stretches are compositionally biased toward polar residues: residues 474–493 (ATRQ…VNNY) and 528–552 (PTTS…GLSP).

Belongs to the HSF family. In terms of assembly, forms homodimers and homotrimers. Component of the DHIC (ddl-1-containing hsf-1 inhibitory complex), which contains at least ddl-1, ddl-2, hsb-1 and hsf-1. Within the complex, interacts with ddl-1. Formation of the DHIC may be dependent upon the Insulin/IGF-1-like signaling (IIS) mediated pathway. Post-translationally, phosphorylated. Sumoylated. Sumoylation may inhibit transcriptional activity in response to heat shock. As to expression, expressed in intestinal cells, body wall muscle cells, and hypodermal cells, as well as many neurons in the head and tail.

It is found in the nucleus. The protein localises to the cytoplasm. Functionally, functions as a stress-inducible and DNA-binding transcription factor, playing a central role in the transcriptional activation of the heat shock response (HSR), leading to the expression of a large class of molecular chaperones, heat shock proteins (HSPs), that protect cells from cellular insult damage. Upon exposure to heat and other stress stimuli, activates gene transcription through binding to site-specific heat shock elements (HSEs) present in the promoter regions of target genes, such as the HSPs. Binds to inverted 5'-NGAAN-3' pentamer DNA sequences in HSEs. Involved in positive modulation of expression of heat shock protein hsp-16.2 in response to heat shock; may act in concert with homeodomain-interacting protein kinase hpk-1. In response to heat shock or starvation, required for the modulation of lifespan, and protection against aberrant protein aggregation proteotoxicity; may act in parallel with the Insulin/IGF-1-like signaling (IIS) mediated pathway. Plays a role in modulating autophagy, in response to a moderate and short-term heat shock, also known as a hormetic heat shock. Involved in positive modulation of ascaroside pheromone biosynthesis in response to heat shock, perhaps by directly activating transcription of peroxisomal fatty acid beta-oxidation genes. Required in modulating the response to infection by either Gram-negative or Gram-positive bacteria, perhaps acting via regulation of expression of Hsp90/daf-21 and members of the small heat shock protein (HSP20) family. May play a role downstream of the daf-16/FOXO and daf-2 signaling pathway in response to bacterial pathogens. Modulates expression of multiple microRNA genes, in both heat shock-dependent and -independent manner. Independent of heat shock, required to modulate expression of genes involved in larval development, mainly distinct from HSPs; acts in concert with putative transcription factor efl-1/E2F, which may form part of a multiprotein DRM complex. Independent of heat shock, involved in promoting death of the linker cell, a male-specific cell which guides the elongation of the gonad; perhaps acting by modulating expression of ubiquitin-conjugating enzyme let-70. Plays a role in egg-laying. This is Heat shock transcription factor hsf-1 from Caenorhabditis elegans.